A 116-amino-acid chain; its full sequence is U16-barytoxin-Tl1c (116 aa).

The signal sequence occupies residues 1–20 (MKTIIVFLSLLVLATKFGDA). The propeptide occupies 21–76 (NEGVNQEQMKEVIQNEFREDFLNEMAPMSLLQQLEAIESTLLEKEADRNSRQKRCN). 3 disulfides stabilise this stretch: Cys75–Cys90, Cys82–Cys95, and Cys89–Cys110.

Belongs to the neurotoxin 14 (magi-1) family. 06 (ICK-Trit) subfamily. Expressed by the venom gland.

It localises to the secreted. In terms of biological role, ion channel inhibitor. This chain is U16-barytoxin-Tl1c, found in Trittame loki (Brush-footed trapdoor spider).